The sequence spans 380 residues: Alkanesulfonate monooxygenase (380 aa).

This sequence belongs to the SsuD family. As to quaternary structure, homotetramer.

The enzyme catalyses an alkanesulfonate + FMNH2 + O2 = an aldehyde + FMN + sulfite + H2O + 2 H(+). Functionally, catalyzes the desulfonation of aliphatic sulfonates. The protein is Alkanesulfonate monooxygenase of Pectobacterium carotovorum subsp. carotovorum (strain PC1).